Consider the following 176-residue polypeptide: SsrA-binding protein (176 aa).

The tract at residues 1 to 33 (MTEAGAKKAAGKKSGKGKGKNAKKNQPNITPVA) is disordered. The segment covering 9–23 (AAGKKSGKGKGKNAK) has biased composition (basic residues).

The protein belongs to the SmpB family.

Its subcellular location is the cytoplasm. Functionally, required for rescue of stalled ribosomes mediated by trans-translation. Binds to transfer-messenger RNA (tmRNA), required for stable association of tmRNA with ribosomes. tmRNA and SmpB together mimic tRNA shape, replacing the anticodon stem-loop with SmpB. tmRNA is encoded by the ssrA gene; the 2 termini fold to resemble tRNA(Ala) and it encodes a 'tag peptide', a short internal open reading frame. During trans-translation Ala-aminoacylated tmRNA acts like a tRNA, entering the A-site of stalled ribosomes, displacing the stalled mRNA. The ribosome then switches to translate the ORF on the tmRNA; the nascent peptide is terminated with the 'tag peptide' encoded by the tmRNA and targeted for degradation. The ribosome is freed to recommence translation, which seems to be the essential function of trans-translation. The polypeptide is SsrA-binding protein (Rhodopirellula baltica (strain DSM 10527 / NCIMB 13988 / SH1)).